Reading from the N-terminus, the 150-residue chain is Large ribosomal subunit protein bL9 (150 aa).

The protein belongs to the bacterial ribosomal protein bL9 family.

Its function is as follows. Binds to the 23S rRNA. The sequence is that of Large ribosomal subunit protein bL9 from Baumannia cicadellinicola subsp. Homalodisca coagulata.